The sequence spans 69 residues: DNA-directed RNA polymerase subunit omega (69 aa).

This sequence belongs to the RNA polymerase subunit omega family. The RNAP catalytic core consists of 2 alpha, 1 beta, 1 beta' and 1 omega subunit. When a sigma factor is associated with the core the holoenzyme is formed, which can initiate transcription.

It catalyses the reaction RNA(n) + a ribonucleoside 5'-triphosphate = RNA(n+1) + diphosphate. In terms of biological role, promotes RNA polymerase assembly. Latches the N- and C-terminal regions of the beta' subunit thereby facilitating its interaction with the beta and alpha subunits. This Carboxydothermus hydrogenoformans (strain ATCC BAA-161 / DSM 6008 / Z-2901) protein is DNA-directed RNA polymerase subunit omega.